The primary structure comprises 293 residues: Protease HtpX homolog (293 aa).

2 helical membrane-spanning segments follow: residues 5–25 (IFLFIVTNLAILLMLSITLRL) and 43–63 (ALLVFSAVLGFGGSLISLAMS). His148 serves as a coordination point for Zn(2+). Residue Glu149 is part of the active site. Position 152 (His152) interacts with Zn(2+). 2 helical membrane-spanning segments follow: residues 159-179 (VTLALIQGVVNTFVIFLSRII) and 199-219 (FVTSLIAQMVLGILATIIVMW). Glu225 contacts Zn(2+).

Belongs to the peptidase M48B family. It depends on Zn(2+) as a cofactor.

It is found in the cell inner membrane. This Nitrosomonas europaea (strain ATCC 19718 / CIP 103999 / KCTC 2705 / NBRC 14298) protein is Protease HtpX homolog.